The chain runs to 510 residues: Maturase K (510 aa).

This sequence belongs to the intron maturase 2 family. MatK subfamily.

The protein resides in the plastid. It is found in the chloroplast. Its function is as follows. Usually encoded in the trnK tRNA gene intron. Probably assists in splicing its own and other chloroplast group II introns. The chain is Maturase K from Grahamia bracteata.